The following is a 152-amino-acid chain: Ribosome maturation factor RimP (152 aa).

Belongs to the RimP family.

It is found in the cytoplasm. Functionally, required for maturation of 30S ribosomal subunits. This chain is Ribosome maturation factor RimP, found in Burkholderia cenocepacia (strain ATCC BAA-245 / DSM 16553 / LMG 16656 / NCTC 13227 / J2315 / CF5610) (Burkholderia cepacia (strain J2315)).